Here is a 356-residue protein sequence, read N- to C-terminus: Peptide chain release factor 1 (356 aa).

Residue glutamine 233 is modified to N5-methylglutamine.

This sequence belongs to the prokaryotic/mitochondrial release factor family. Methylated by PrmC. Methylation increases the termination efficiency of RF1.

The protein resides in the cytoplasm. Peptide chain release factor 1 directs the termination of translation in response to the peptide chain termination codons UAG and UAA. The protein is Peptide chain release factor 1 of Syntrophotalea carbinolica (strain DSM 2380 / NBRC 103641 / GraBd1) (Pelobacter carbinolicus).